Here is a 22-residue protein sequence, read N- to C-terminus: C-type natriuretic peptide (22 aa).

Residues C6 and C22 are joined by a disulfide bond.

Belongs to the natriuretic peptide family.

The protein resides in the secreted. In terms of biological role, hormone which plays a role in endochondral ossification through regulation of cartilaginous growth plate chondrocytes proliferation and differentiation. May also be vasoactive and natriuretic. Specifically binds and stimulates the cGMP production of the NPR2 receptor. Binds the clearance receptor NPR3. This Gallus gallus (Chicken) protein is C-type natriuretic peptide (NPPC).